The following is a 395-amino-acid chain: Bifunctional enzyme IspD/IspF (395 aa).

The 2-C-methyl-D-erythritol 4-phosphate cytidylyltransferase stretch occupies residues 1-237; it reads MRTWVLLLAA…DANEPQVTVP (237 aa). Residues 238–395 form a 2-C-methyl-D-erythritol 2,4-cyclodiphosphate synthase region; sequence CVGWGYDVHR…AAVTGLRPMP (158 aa). The a divalent metal cation site is built by D244 and H246. 4-CDP-2-C-methyl-D-erythritol 2-phosphate is bound by residues 244-246 and 270-271; these read DVH and HS. H278 provides a ligand contact to a divalent metal cation. 4-CDP-2-C-methyl-D-erythritol 2-phosphate is bound by residues 292–294, 297–301, 368–371, and F375; these read DIG, FPDSD, and TTEE.

The protein in the N-terminal section; belongs to the IspD/TarI cytidylyltransferase family. IspD subfamily. It in the C-terminal section; belongs to the IspF family. It depends on a divalent metal cation as a cofactor.

It catalyses the reaction 2-C-methyl-D-erythritol 4-phosphate + CTP + H(+) = 4-CDP-2-C-methyl-D-erythritol + diphosphate. It carries out the reaction 4-CDP-2-C-methyl-D-erythritol 2-phosphate = 2-C-methyl-D-erythritol 2,4-cyclic diphosphate + CMP. It participates in isoprenoid biosynthesis; isopentenyl diphosphate biosynthesis via DXP pathway; isopentenyl diphosphate from 1-deoxy-D-xylulose 5-phosphate: step 2/6. Its pathway is isoprenoid biosynthesis; isopentenyl diphosphate biosynthesis via DXP pathway; isopentenyl diphosphate from 1-deoxy-D-xylulose 5-phosphate: step 4/6. Bifunctional enzyme that catalyzes the formation of 4-diphosphocytidyl-2-C-methyl-D-erythritol from CTP and 2-C-methyl-D-erythritol 4-phosphate (MEP) (IspD), and catalyzes the conversion of 4-diphosphocytidyl-2-C-methyl-D-erythritol 2-phosphate (CDP-ME2P) to 2-C-methyl-D-erythritol 2,4-cyclodiphosphate (ME-CPP) with a corresponding release of cytidine 5-monophosphate (CMP) (IspF). The sequence is that of Bifunctional enzyme IspD/IspF from Nitratidesulfovibrio vulgaris (strain ATCC 29579 / DSM 644 / CCUG 34227 / NCIMB 8303 / VKM B-1760 / Hildenborough) (Desulfovibrio vulgaris).